Here is a 354-residue protein sequence, read N- to C-terminus: cAMP-dependent protein kinase catalytic subunit 2 (354 aa).

One can recognise a Protein kinase domain in the interval 45–301 (YITRAVLGNG…SSDVKSHPWF (257 aa)). ATP-binding positions include 51–59 (LGNGSFGTV) and Lys74. Asp168 serves as the catalytic Proton acceptor. In terms of domain architecture, AGC-kinase C-terminal spans 302 to 354 (QGVDWFGILNQEVTAPYQPTISGAEDLSNFENFEFKDRYKSRINRHPELFANF).

The protein belongs to the protein kinase superfamily. AGC Ser/Thr protein kinase family. cAMP subfamily. More abundant in adult body than adult head.

It carries out the reaction L-seryl-[protein] + ATP = O-phospho-L-seryl-[protein] + ADP + H(+). The catalysed reaction is L-threonyl-[protein] + ATP = O-phospho-L-threonyl-[protein] + ADP + H(+). This is cAMP-dependent protein kinase catalytic subunit 2 (Pka-C2) from Drosophila melanogaster (Fruit fly).